Reading from the N-terminus, the 111-residue chain is Prothymosin alpha (111 aa).

N-acetylmethionine is present on Met-1. The interval 1–111 (MSDAAVDTSS…TKKQKTEEDD (111 aa)) is disordered. Ser-2 carries the post-translational modification N-acetylserine; in Prothymosin alpha, N-terminally processed. Ser-2 carries the phosphoserine modification. Position 8 is a phosphothreonine (Thr-8). Ser-9 and Ser-10 each carry phosphoserine. Phosphothreonine is present on residues Thr-13 and Thr-14. Positions 13–31 (TTKDLKEKKEVVEEAENGR) are enriched in basic and acidic residues. N6-acetyllysine; alternate is present on Lys-15. Lys-15 carries the N6-succinyllysine; alternate modification. Acidic residues predominate over residues 43–84 (ENGEQEADNEVDEEEEEGGEEEEEEEEGDGEEEDGDEDEEAE). Positions 101–111 (DTKKQKTEEDD) are enriched in basic and acidic residues. Phosphothreonine is present on Thr-102. N6-acetyllysine; alternate is present on Lys-103. A Glycyl lysine isopeptide (Lys-Gly) (interchain with G-Cter in SUMO2); alternate cross-link involves residue Lys-103. Thr-107 is subject to Phosphothreonine.

This sequence belongs to the pro/parathymosin family. Interacts with NUPR1; regulates apoptotic process. Covalently linked to a small RNA of about 20 nucleotides.

The protein resides in the nucleus. Its function is as follows. Prothymosin alpha may mediate immune function by conferring resistance to certain opportunistic infections. The polypeptide is Prothymosin alpha (Ptma) (Mus musculus (Mouse)).